The primary structure comprises 779 residues: Lysosome membrane protein 2-A (779 aa).

Topologically, residues 1–17 (MVKRGCCHRKMVNHKGC) are cytoplasmic. The helical transmembrane segment at 18–38 (LVSGIFLAVIGAVLFILAFAL) threads the bilayer. At 39–732 (LPHLINQTTQ…LLNSQFKLIK (694 aa)) the chain is on the lumenal side. Asparagine 44, asparagine 86, asparagine 95, asparagine 114, asparagine 117, asparagine 201, asparagine 239, asparagine 262, asparagine 266, asparagine 277, asparagine 369, asparagine 410, asparagine 440, asparagine 508, asparagine 543, asparagine 601, asparagine 619, asparagine 651, and asparagine 693 each carry an N-linked (GlcNAc...) asparagine glycan. Residues 733–753 (ILGFVPVIVVSIIGGIILIAG) form a helical membrane-spanning segment. Residues 754 to 779 (ISMFAFGFKKLRQQKQQGYQAIINNE) are Cytoplasmic-facing. The Tyrosine-type lysosomal sorting signal motif lies at 771–774 (GYQA).

It belongs to the CD36 family. In terms of processing, heavily glycosylated.

It is found in the lysosome membrane. May act as a lysosomal receptor. May be involved in macropinocytosis and fluid phase exocytosis. Binds to the anionic phospholipid phosphoinositol 4,5-bisphosphate, but not to phosphatidylcholine and only weakly to phosphatidylserine. The chain is Lysosome membrane protein 2-A (lmpA) from Dictyostelium discoideum (Social amoeba).